A 3471-amino-acid polypeptide reads, in one-letter code: Abnormal spindle-like microcephaly-associated protein homolog (3471 aa).

The interval 1-26 (MANRRVGRGCWEVSPTERRPPAAEEE) is disordered. Phosphoserine occurs at positions 274, 277, 361, 386, and 419. The segment covering 555 to 564 (EVTPSSTTAS) has biased composition (polar residues). The interval 555 to 576 (EVTPSSTTASVARKRKSDGSME) is disordered. Serine 599 bears the Phosphoserine mark. The Calponin-homology (CH) 1 domain maps to 914 to 1050 (KASKEILLAF…LLWKIAFAFQ (137 aa)). Positions 1051–1072 (VDISLNLDQLKEEIAFLKHTKS) form a coiled coil. Serine 1097 is subject to Phosphoserine. Residues 1104 to 1255 (SENIKLLMDW…YLSFLCARLL (152 aa)) form the Calponin-homology (CH) 2 domain. 39 consecutive IQ domains span residues 1341–1372 (QNKA…IILQ), 1387–1416 (YLWA…MLKS), 1576–1607 (LKKT…VIIQ), 1599–1628 (MKKA…KTRS), 1626–1655 (TRSA…SVIK), 1649–1678 (ILTS…ATIK), 1722–1751 (MRES…AVIS), 1745–1776 (QRKA…IVIQ), 1795–1824 (VKKA…AALK), 1818–1847 (QSIA…SIIK), 1868–1897 (TKAA…AALK), 1891–1922 (EHQA…LVIQ), 1941–1972 (LRHA…IIIQ), 1964–1995 (QHKC…LLIQ), 2014–2043 (TKAA…AAVT), 2037–2068 (CNKA…IIIQ), 2087–2118 (LKKT…TFIK), 2110–2141 (MHRA…IVIQ), 2160–2191 (ILKA…TLIQ), 2183–2212 (MQIA…ITKT), 2233–2264 (LRHS…TLIQ), 2256–2287 (MHIA…IWIQ), 2305–2336 (VQNA…TFIQ), 2378–2409 (QRHS…TLIQ), 2401–2432 (MHSS…IFVQ), 2451–2482 (LRKS…VLIQ), 2524–2555 (QWHS…IIIQ), 2659–2690 (RTQA…TLIQ), 2682–2713 (MHRA…VVIQ), 2732–2761 (VQKS…EKMA), 2853–2884 (QKRA…VVLQ), 2903–2932 (IRSS…STIK), 2926–2957 (IKNS…KIQA), 2948–2979 (KVKA…KIIQ), 3023–3054 (RHRA…LVIQ), 3073–3104 (FKKS…RLLH), 3134–3163 (QVNS…SIKK), 3175–3204 (QNRA…GIIK), and 3198–3229 (FTSG…IRLS).

It is found in the cytoplasm. It localises to the cytoskeleton. The protein localises to the spindle. Its subcellular location is the nucleus. In terms of biological role, probable role in mitotic spindle regulation and coordination of mitotic processes. May have a preferential role in regulating neurogenesis. This Pongo pygmaeus (Bornean orangutan) protein is Abnormal spindle-like microcephaly-associated protein homolog (ASPM).